The primary structure comprises 826 residues: Lon protease (826 aa).

A Lon N-terminal domain is found at 26-221 (LPMLPVRDVV…AVNGFVSREV (196 aa)). 373-380 (GPPGVGKT) contacts ATP. The 182-residue stretch at 609–790 (EPQIGLATGL…NEVLEKALLP (182 aa)) folds into the Lon proteolytic domain. Catalysis depends on residues serine 696 and lysine 739. A disordered region spans residues 788 to 826 (LLPAEKKKAPPKKKPPKKAAKPKAKKTQPKAKTTEAADK). Residues 796 to 816 (APPKKKPPKKAAKPKAKKTQP) are compositionally biased toward basic residues.

Belongs to the peptidase S16 family. As to quaternary structure, homohexamer. Organized in a ring with a central cavity.

It localises to the cytoplasm. It carries out the reaction Hydrolysis of proteins in presence of ATP.. Functionally, ATP-dependent serine protease that mediates the selective degradation of mutant and abnormal proteins as well as certain short-lived regulatory proteins. Required for cellular homeostasis and for survival from DNA damage and developmental changes induced by stress. Degrades polypeptides processively to yield small peptide fragments that are 5 to 10 amino acids long. Binds to DNA in a double-stranded, site-specific manner. The chain is Lon protease from Desulfatibacillum aliphaticivorans.